Reading from the N-terminus, the 392-residue chain is Formate-dependent phosphoribosylglycinamide formyltransferase (392 aa).

Residues 22–23 (EL) and glutamate 82 contribute to the N(1)-(5-phospho-beta-D-ribosyl)glycinamide site. ATP is bound by residues arginine 114, lysine 155, 160–165 (SSGKGQ), 195–198 (EGVV), and glutamate 203. One can recognise an ATP-grasp domain in the interval 119-308 (RLAAEELQLP…EFALHVRAFL (190 aa)). Residues glutamate 267 and glutamate 279 each contribute to the Mg(2+) site. Residues aspartate 286, lysine 355, and 362–363 (RR) contribute to the N(1)-(5-phospho-beta-D-ribosyl)glycinamide site.

It belongs to the PurK/PurT family. As to quaternary structure, homodimer.

The catalysed reaction is N(1)-(5-phospho-beta-D-ribosyl)glycinamide + formate + ATP = N(2)-formyl-N(1)-(5-phospho-beta-D-ribosyl)glycinamide + ADP + phosphate + H(+). The protein operates within purine metabolism; IMP biosynthesis via de novo pathway; N(2)-formyl-N(1)-(5-phospho-D-ribosyl)glycinamide from N(1)-(5-phospho-D-ribosyl)glycinamide (formate route): step 1/1. Involved in the de novo purine biosynthesis. Catalyzes the transfer of formate to 5-phospho-ribosyl-glycinamide (GAR), producing 5-phospho-ribosyl-N-formylglycinamide (FGAR). Formate is provided by PurU via hydrolysis of 10-formyl-tetrahydrofolate. The chain is Formate-dependent phosphoribosylglycinamide formyltransferase from Shigella boydii serotype 18 (strain CDC 3083-94 / BS512).